Here is a 224-residue protein sequence, read N- to C-terminus: UPF0173 metal-dependent hydrolase TK0141 (224 aa).

This sequence belongs to the UPF0173 family.

The chain is UPF0173 metal-dependent hydrolase TK0141 from Thermococcus kodakarensis (strain ATCC BAA-918 / JCM 12380 / KOD1) (Pyrococcus kodakaraensis (strain KOD1)).